Here is a 315-residue protein sequence, read N- to C-terminus: MVKFQIIARDFYHGFIDSFKGITFVRRIREEEAKEVKVEPPKPVERTVLMMRREKQGIFKRPPEPPKKKDSFLKKLWQIYAMNIGFLVLWQVCILILGLFFSFFDRTDLGHNIGYILIIPIFFASRIIQALWFSDISGACMRALKLPPPPVVPFSSMLAGTLISALHQIFFLIQGMLSQYLPIPLITPVIVYLHMALLNSMYCFDYFFDGYNLSFLRRKDIFESHWPYFLGFGTPLALACSISSNMFVNSVIFALLFPFFIITSYPANWNRKYEEEIPKIAFCRISYMFTELVGKFVKSITPTNNPTAARNNAQN.

The next 6 helical transmembrane spans lie at 84 to 104, 113 to 133, 146 to 166, 190 to 210, 221 to 241, and 242 to 262; these read IGFLVLWQVCILILGLFFSFF, IGYILIIPIFFASRIIQALWF, LPPPPVVPFSSMLAGTLISAL, IVYLHMALLNSMYCFDYFFDG, IFESHWPYFLGFGTPLALACS, and ISSNMFVNSVIFALLFPFFII.

Belongs to the EI24 family. As to expression, expressed in pharyngeal and body wall muscles and intestine cells.

The protein resides in the cytoplasm. The protein localises to the membrane. In terms of biological role, involved in autophagy. Thought to act in autophagasome and omegasome formation. This is Ectopic P granules protein 4 from Caenorhabditis elegans.